A 575-amino-acid chain; its full sequence is TOX high mobility group box family member 3 (575 aa).

Disordered regions lie at residues Leu-189–Val-258 and Gln-516–Phe-575. Residues Ser-195 to Ser-214 are compositionally biased toward low complexity. Basic and acidic residues predominate over residues Asp-222–Lys-238. Over residues Lys-239–Lys-249 the composition is skewed to basic residues. Residues Pro-254–Arg-322 constitute a DNA-binding region (HMG box). A compositionally biased stretch (low complexity) spans Gln-516–Gln-526. The segment covering Pro-527 to Ser-541 has biased composition (polar residues). Residues Ser-548–Phe-575 are compositionally biased toward low complexity.

Homodimer. Interacts (via HGM box) with CITED1 (via C-terminus); the interaction increases estrogen-response element (ERE)-dependent transcription and protection against cell death. Interacts with CREB1 (phosphorylated form). Interacts with CREB1; the interaction is not depolarization dependent. Interacts with CREBBP (via C-terminus).

The protein resides in the nucleus. Functionally, transcriptional coactivator of the p300/CBP-mediated transcription complex. Activates transactivation through cAMP response element (CRE) sites. Protects against cell death by inducing antiapoptotic and repressing pro-apoptotic transcripts. Stimulates transcription from the estrogen-responsive or BCL-2 promoters. Required for depolarization-induced transcription activation of the C-FOS promoter in neurons. Associates with chromatin to the estrogen-responsive C3 promoter region. The protein is TOX high mobility group box family member 3 (Tox3) of Mus musculus (Mouse).